A 350-amino-acid polypeptide reads, in one-letter code: N-acetyl-gamma-glutamyl-phosphate reductase (350 aa).

The active site involves C154.

The protein belongs to the NAGSA dehydrogenase family. Type 1 subfamily.

It localises to the cytoplasm. It catalyses the reaction N-acetyl-L-glutamate 5-semialdehyde + phosphate + NADP(+) = N-acetyl-L-glutamyl 5-phosphate + NADPH + H(+). It participates in amino-acid biosynthesis; L-arginine biosynthesis; N(2)-acetyl-L-ornithine from L-glutamate: step 3/4. In terms of biological role, catalyzes the NADPH-dependent reduction of N-acetyl-5-glutamyl phosphate to yield N-acetyl-L-glutamate 5-semialdehyde. In Corynebacterium efficiens (strain DSM 44549 / YS-314 / AJ 12310 / JCM 11189 / NBRC 100395), this protein is N-acetyl-gamma-glutamyl-phosphate reductase.